The sequence spans 245 residues: Probable phosphatase YcdX (245 aa).

His-7, His-9, His-15, His-40, Glu-73, His-101, His-131, Asp-192, and His-194 together coordinate Zn(2+).

This sequence belongs to the PHP family. Homotrimer. Requires Zn(2+) as cofactor.

The polypeptide is Probable phosphatase YcdX (Escherichia coli O127:H6 (strain E2348/69 / EPEC)).